We begin with the raw amino-acid sequence, 285 residues long: Pantothenate synthetase (285 aa).

30-37 provides a ligand contact to ATP; the sequence is MGNLHQGH. His-37 functions as the Proton donor in the catalytic mechanism. Gln-61 lines the (R)-pantoate pocket. Residue Gln-61 coordinates beta-alanine. 149 to 152 is a binding site for ATP; that stretch reads GQKD. Gln-155 provides a ligand contact to (R)-pantoate. ATP-binding positions include Val-178 and 186–189; that span reads LSSR.

Belongs to the pantothenate synthetase family. Homodimer.

Its subcellular location is the cytoplasm. The enzyme catalyses (R)-pantoate + beta-alanine + ATP = (R)-pantothenate + AMP + diphosphate + H(+). Its pathway is cofactor biosynthesis; (R)-pantothenate biosynthesis; (R)-pantothenate from (R)-pantoate and beta-alanine: step 1/1. Catalyzes the condensation of pantoate with beta-alanine in an ATP-dependent reaction via a pantoyl-adenylate intermediate. In Aeromonas hydrophila subsp. hydrophila (strain ATCC 7966 / DSM 30187 / BCRC 13018 / CCUG 14551 / JCM 1027 / KCTC 2358 / NCIMB 9240 / NCTC 8049), this protein is Pantothenate synthetase.